The sequence spans 864 residues: DNA mismatch repair protein MutS (864 aa).

607–614 (GPNMGGKS) serves as a coordination point for ATP.

This sequence belongs to the DNA mismatch repair MutS family.

Its function is as follows. This protein is involved in the repair of mismatches in DNA. It is possible that it carries out the mismatch recognition step. This protein has a weak ATPase activity. The chain is DNA mismatch repair protein MutS from Neisseria meningitidis serogroup A / serotype 4A (strain DSM 15465 / Z2491).